The chain runs to 455 residues: Epoxide hydrolase 1 (455 aa).

The helical; Signal-anchor for type III membrane protein transmembrane segment at 1–21 (MWLELILASVLGFVIYWFVSR) threads the bilayer. The Cytoplasmic portion of the chain corresponds to 22–455 (DKEETLPLED…RKFVSLAELQ (434 aa)). Aspartate 226 (nucleophile) is an active-site residue. The residue at position 295 (arginine 295) is a Dimethylated arginine. Tyrosine 374 (proton donor) is an active-site residue. Histidine 431 (proton acceptor) is an active-site residue. Residue lysine 439 is modified to N6-acetyllysine.

It belongs to the peptidase S33 family.

It localises to the microsome membrane. The protein resides in the endoplasmic reticulum membrane. The catalysed reaction is cis-stilbene oxide + H2O = (1R,2R)-hydrobenzoin. It catalyses the reaction 1-(4-methoxyphenyl)-N-methyl-N-[(3-methyloxetan-3-yl)methyl]methanamine + H2O = 2-{[(4-methoxybenzyl)(methyl)amino]methyl}-2-methylpropane-1,3-diol. It carries out the reaction 8,9-epoxy-(5Z,11Z,14Z)-eicosatrienoate + H2O = 8,9-dihydroxy-(5Z,11Z,14Z)-eicosatrienoate. The enzyme catalyses 11,12-epoxy-(5Z,8Z,14Z)-eicosatrienoate + H2O = 11,12-dihydroxy-(5Z,8Z,14Z)-eicosatrienoate. The catalysed reaction is 2-(5Z,8Z,11Z,14Z-eicosatetraenoyl)-glycerol + H2O = glycerol + (5Z,8Z,11Z,14Z)-eicosatetraenoate + H(+). With respect to regulation, inhibited by 10-hydroxystearamide and methoxy-arachidonyl fluorophosphate. Functionally, biotransformation enzyme that catalyzes the hydrolysis of arene and aliphatic epoxides to less reactive and more water soluble dihydrodiols by the trans addition of water. May play a role in the metabolism of endogenous lipids such as epoxide-containing fatty acids. Metabolizes the abundant endocannabinoid 2-arachidonoylglycerol (2-AG) to free arachidonic acid (AA) and glycerol. Binds 20(S)-hydroxycholesterol (20(S)-OHC). The sequence is that of Epoxide hydrolase 1 from Mus musculus (Mouse).